A 484-amino-acid polypeptide reads, in one-letter code: Zinc metalloproteinase homolog-disintegrin albolatin (484 aa).

The N-terminal stretch at 1–20 (MIQVLLVTICLAVFPYQGSS) is a signal peptide. A propeptide spanning residues 21 to 191 (IILESGNVND…KTSQLNLPLL (171 aa)) is cleaved from the precursor. N-linked (GlcNAc...) asparagine glycosylation is found at Asn-80, Asn-251, and Asn-301. The Peptidase M12B domain occupies 194–392 (RCIELVMVAD…WTSYCLYNEP (199 aa)). Cystine bridges form between Cys-305-Cys-387, Cys-345-Cys-369, Cys-347-Cys-352, Cys-403-Cys-422, Cys-414-Cys-432, Cys-416-Cys-427, Cys-426-Cys-449, Cys-440-Cys-446, Cys-445-Cys-470, and Cys-458-Cys-477. Residues 400-484 (PPVCGNYYLE…GDCPWIGYYG (85 aa)) enclose the Disintegrin domain. The short motif at 462–464 (KGD) is the Cell attachment site; atypical (KGD) element.

This sequence belongs to the venom metalloproteinase (M12B) family. P-II subfamily. P-IIb sub-subfamily. Homodimer; disulfide-linked (disintegrin). As to expression, expressed by the venom gland.

Its subcellular location is the secreted. Functionally, the function of this complete protein has not been studied, but it may be similar to the function of the disintegrin domain. A recombinant protein of this domain (409-484) inhibits collagen-induced human platelet aggregation, without having effect on ADP-induced aggregation. It may act either by blocking the binding of fibrinogen to the platelet receptor GPIIb/GPIIIa (ITGA2B/ITGB3) or by blocking the binding of collagen to the integrin alpha-2/beta-1 complex (ITGA2/ITGB1). The protein is Zinc metalloproteinase homolog-disintegrin albolatin of Trimeresurus albolabris (White-lipped pit viper).